We begin with the raw amino-acid sequence, 284 residues long: Agamous-like MADS-box protein AGL49 (284 aa).

A disordered region spans residues 1-20 (MAPRQKKPNKSDDDDGDLHR). The region spanning 21–66 (KKQSFFKQRFPGFKKKASELSVLCGNSVGFICYGPDNDLHVWPQSQ) is the MADS-box domain.

In terms of assembly, interacts with MEE14/CBP1.

The protein resides in the nucleus. Its function is as follows. Probable transcription factor that may function in the maintenance of the proper function of the central cell in pollen tube attraction. In Arabidopsis thaliana (Mouse-ear cress), this protein is Agamous-like MADS-box protein AGL49.